Consider the following 447-residue polypeptide: Na(+)-translocating NADH-quinone reductase subunit A (447 aa).

This sequence belongs to the NqrA family. In terms of assembly, composed of six subunits; NqrA, NqrB, NqrC, NqrD, NqrE and NqrF.

It carries out the reaction a ubiquinone + n Na(+)(in) + NADH + H(+) = a ubiquinol + n Na(+)(out) + NAD(+). Its function is as follows. NQR complex catalyzes the reduction of ubiquinone-1 to ubiquinol by two successive reactions, coupled with the transport of Na(+) ions from the cytoplasm to the periplasm. NqrA to NqrE are probably involved in the second step, the conversion of ubisemiquinone to ubiquinol. The protein is Na(+)-translocating NADH-quinone reductase subunit A of Yersinia pestis.